A 124-amino-acid chain; its full sequence is Cytoinsectotoxin-4 (124 aa).

An N-terminal signal peptide occupies residues 1–19 (MKCFILAAALVLAFACIAA). Residues 20–62 (SEPAETENEDLDDLSDLEDEEWLDELEEAAEYLESLREFEESR) constitute a propeptide that is removed on maturation. Phe123 carries the phenylalanine amide modification.

It belongs to the cationic peptide 06 (cytoinsectotoxin) family. Expressed by the venom gland.

The protein resides in the secreted. Insecticidal and antimicrobial peptide. Has insecticidal activity against larvae of flesh fly S.carnaria. Has antibacterial activity against Gram-positive bacterium B.subtilis B-501 (MIC=2.5 uM) and Gram-negative bacterium E.coli DH5alpha (MIC=10 uM). In Lachesana tarabaevi (Spider), this protein is Cytoinsectotoxin-4.